The following is a 313-amino-acid chain: tRNA-cytidine(32) 2-sulfurtransferase (313 aa).

The PP-loop motif motif lies at 47–52; sequence SGGKDS. The [4Fe-4S] cluster site is built by Cys-122, Cys-125, and Cys-213.

The protein belongs to the TtcA family. As to quaternary structure, homodimer. Requires Mg(2+) as cofactor. It depends on [4Fe-4S] cluster as a cofactor.

The protein resides in the cytoplasm. The catalysed reaction is cytidine(32) in tRNA + S-sulfanyl-L-cysteinyl-[cysteine desulfurase] + AH2 + ATP = 2-thiocytidine(32) in tRNA + L-cysteinyl-[cysteine desulfurase] + A + AMP + diphosphate + H(+). Its pathway is tRNA modification. In terms of biological role, catalyzes the ATP-dependent 2-thiolation of cytidine in position 32 of tRNA, to form 2-thiocytidine (s(2)C32). The sulfur atoms are provided by the cysteine/cysteine desulfurase (IscS) system. This chain is tRNA-cytidine(32) 2-sulfurtransferase, found in Yersinia pseudotuberculosis serotype IB (strain PB1/+).